The chain runs to 335 residues: Glyceraldehyde-3-phosphate dehydrogenase, cytosolic (335 aa).

NAD(+) is bound by residues 13 to 14 (RI), aspartate 35, and arginine 80. D-glyceraldehyde 3-phosphate contacts are provided by residues 151–153 (SCT), threonine 182, 211–212 (TG), and arginine 234. Cysteine 152 serves as the catalytic Nucleophile. An NAD(+)-binding site is contributed by asparagine 316.

The protein belongs to the glyceraldehyde-3-phosphate dehydrogenase family. As to quaternary structure, homotetramer.

The protein localises to the cytoplasm. The enzyme catalyses D-glyceraldehyde 3-phosphate + phosphate + NAD(+) = (2R)-3-phospho-glyceroyl phosphate + NADH + H(+). Its pathway is carbohydrate degradation; glycolysis; pyruvate from D-glyceraldehyde 3-phosphate: step 1/5. The polypeptide is Glyceraldehyde-3-phosphate dehydrogenase, cytosolic (GAPC) (Chondrus crispus (Carrageen Irish moss)).